The following is a 190-amino-acid chain: Probable chorismate pyruvate-lyase (190 aa).

Substrate-binding residues include arginine 77, leucine 115, and glutamate 174.

Belongs to the UbiC family.

The protein resides in the cytoplasm. It carries out the reaction chorismate = 4-hydroxybenzoate + pyruvate. The protein operates within cofactor biosynthesis; ubiquinone biosynthesis. In terms of biological role, removes the pyruvyl group from chorismate, with concomitant aromatization of the ring, to provide 4-hydroxybenzoate (4HB) for the ubiquinone pathway. The protein is Probable chorismate pyruvate-lyase of Shewanella sp. (strain MR-4).